A 395-amino-acid chain; its full sequence is Elongation factor Tu (395 aa).

The tr-type G domain maps to 10-204 (KPHVNIGTIG…AVDNYIPHPV (195 aa)). Residues 19–26 (GHVDHGKT) form a G1 region. Residue 19–26 (GHVDHGKT) participates in GTP binding. Position 26 (Thr-26) interacts with Mg(2+). A G2 region spans residues 60 to 64 (GITIS). Positions 81 to 84 (DCPG) are G3. GTP-binding positions include 81–85 (DCPGH) and 136–139 (NKVD). Residues 136–139 (NKVD) are G4. The G5 stretch occupies residues 174–176 (SAL).

This sequence belongs to the TRAFAC class translation factor GTPase superfamily. Classic translation factor GTPase family. EF-Tu/EF-1A subfamily. In terms of assembly, monomer.

It localises to the cytoplasm. The enzyme catalyses GTP + H2O = GDP + phosphate + H(+). Functionally, GTP hydrolase that promotes the GTP-dependent binding of aminoacyl-tRNA to the A-site of ribosomes during protein biosynthesis. This is Elongation factor Tu from Rickettsia akari (strain Hartford).